A 153-amino-acid polypeptide reads, in one-letter code: MSITVHIQYAVPKASVPLQADFLRWVKAALVNQSKAGEITIRVASESEAAQLNWRYRHKEGATNILSFPFEVPSCVSLDVPLLGDLVICAPVVAREALEQTKKEQAHWAHLVVHGVLHLLGFDHQQEVEAQQMESLEVTILESLGYPDPYESV.

Zn(2+)-binding residues include His114, His118, and His124.

This sequence belongs to the endoribonuclease YbeY family. The cofactor is Zn(2+).

The protein localises to the cytoplasm. Functionally, single strand-specific metallo-endoribonuclease involved in late-stage 70S ribosome quality control and in maturation of the 3' terminus of the 16S rRNA. The sequence is that of Endoribonuclease YbeY from Nitrosococcus oceani (strain ATCC 19707 / BCRC 17464 / JCM 30415 / NCIMB 11848 / C-107).